A 211-amino-acid chain; its full sequence is Protein crossbronx-like (211 aa).

The UBC core domain occupies Asn-17–Lys-177.

It belongs to the ubiquitin-conjugating enzyme family. FTS subfamily.

The polypeptide is Protein crossbronx-like (Drosophila grimshawi (Hawaiian fruit fly)).